Reading from the N-terminus, the 273-residue chain is Pantothenate synthetase (273 aa).

ATP is bound at residue Met27–His34. Catalysis depends on His34, which acts as the Proton donor. Residue Gln58 participates in (R)-pantoate binding. Gln58 contacts beta-alanine. Position 144 to 147 (Gly144 to Asp147) interacts with ATP. A (R)-pantoate-binding site is contributed by Gln150. ATP-binding positions include Val173 and Leu181–Arg184.

The protein belongs to the pantothenate synthetase family. Homodimer.

The protein resides in the cytoplasm. The enzyme catalyses (R)-pantoate + beta-alanine + ATP = (R)-pantothenate + AMP + diphosphate + H(+). It participates in cofactor biosynthesis; (R)-pantothenate biosynthesis; (R)-pantothenate from (R)-pantoate and beta-alanine: step 1/1. Functionally, catalyzes the condensation of pantoate with beta-alanine in an ATP-dependent reaction via a pantoyl-adenylate intermediate. The protein is Pantothenate synthetase of Campylobacter concisus (strain 13826).